A 548-amino-acid chain; its full sequence is Membrane protein insertase YidC (548 aa).

The helical transmembrane segment at 6 to 26 (NLLVIALLFVSFMIWQAWEQD) threads the bilayer. Residues 28-58 (NPQPQQQQTTQTTTTAAGSAADQGVPASGQG) are disordered. Residues 29 to 42 (PQPQQQQTTQTTTT) are compositionally biased toward low complexity. The next 4 membrane-spanning stretches (helical) occupy residues 350–370 (FLGN…GIMY), 420–440 (LGGC…YYML), 458–478 (LSAQ…MFFI), and 499–519 (PVIF…YYIV).

Belongs to the OXA1/ALB3/YidC family. Type 1 subfamily. In terms of assembly, interacts with the Sec translocase complex via SecD. Specifically interacts with transmembrane segments of nascent integral membrane proteins during membrane integration.

It localises to the cell inner membrane. Required for the insertion and/or proper folding and/or complex formation of integral membrane proteins into the membrane. Involved in integration of membrane proteins that insert both dependently and independently of the Sec translocase complex, as well as at least some lipoproteins. Aids folding of multispanning membrane proteins. The chain is Membrane protein insertase YidC from Enterobacter sp. (strain 638).